The chain runs to 616 residues: Dihydroxy-acid dehydratase (616 aa).

Mg(2+) is bound at residue Asp-81. Residue Cys-122 coordinates [2Fe-2S] cluster. Residues Asp-123 and Lys-124 each contribute to the Mg(2+) site. Lys-124 bears the N6-carboxylysine mark. Cys-195 provides a ligand contact to [2Fe-2S] cluster. Glu-491 is a Mg(2+) binding site. The active-site Proton acceptor is the Ser-517.

This sequence belongs to the IlvD/Edd family. In terms of assembly, homodimer. Requires [2Fe-2S] cluster as cofactor. Mg(2+) serves as cofactor.

The enzyme catalyses (2R)-2,3-dihydroxy-3-methylbutanoate = 3-methyl-2-oxobutanoate + H2O. The catalysed reaction is (2R,3R)-2,3-dihydroxy-3-methylpentanoate = (S)-3-methyl-2-oxopentanoate + H2O. The protein operates within amino-acid biosynthesis; L-isoleucine biosynthesis; L-isoleucine from 2-oxobutanoate: step 3/4. It functions in the pathway amino-acid biosynthesis; L-valine biosynthesis; L-valine from pyruvate: step 3/4. Functions in the biosynthesis of branched-chain amino acids. Catalyzes the dehydration of (2R,3R)-2,3-dihydroxy-3-methylpentanoate (2,3-dihydroxy-3-methylvalerate) into 2-oxo-3-methylpentanoate (2-oxo-3-methylvalerate) and of (2R)-2,3-dihydroxy-3-methylbutanoate (2,3-dihydroxyisovalerate) into 2-oxo-3-methylbutanoate (2-oxoisovalerate), the penultimate precursor to L-isoleucine and L-valine, respectively. In Pectobacterium carotovorum subsp. carotovorum (strain PC1), this protein is Dihydroxy-acid dehydratase.